Consider the following 1609-residue polypeptide: Chitin synthase 5 (1609 aa).

3 disordered regions span residues 1–188 (MNPF…DRER), 248–280 (SGLG…GRDE), and 294–320 (VSLR…ESKT). Over 1-326 (MNPFESLPDA…ESKTSRIAPG (326 aa)) the chain is Cytoplasmic. A compositionally biased stretch (polar residues) spans 34 to 44 (PGSTGRPQNPI). Low complexity predominate over residues 61 to 82 (PQQQQQQQQQQQQQQQRSQQPF). Over residues 100–111 (AYLNSTSSQPTQ) the composition is skewed to polar residues. The span at 134 to 146 (DSVKSYGDDKRSI) shows a compositional bias: basic and acidic residues. Positions 147 to 163 (NDPNSSSTALTQVNSLD) are enriched in polar residues. Residues 253-267 (TGPTNVPPGGLGRAP) are compositionally biased toward low complexity. Basic and acidic residues predominate over residues 307 to 320 (PSKEVPRDLGESKT). The chain crosses the membrane as a helical span at residues 327 to 347 (PVGGWMIYCYILTICCPGPFL). Over 348–364 (RIFGIRTPEQQRAWREK) the chain is Extracellular. A helical transmembrane segment spans residues 365 to 385 (MGLIGIITLIMAAVGFLTFGF). Over 386-624 (TQTVCGQQPD…ASKVELYLSL (239 aa)) the chain is Cytoplasmic. The helical transmembrane segment at 625–645 (VFIIGVVAIKFFMAVMFGWFI) threads the bilayer. The Extracellular portion of the chain corresponds to 646-1176 (SWRLGNYANE…MRFVVFMELT (531 aa)). Asn654 carries an N-linked (GlcNAc...) asparagine glycan. The segment at 729 to 767 (GVASPLGGSPPGSPSVAGGRSSASLAPAHSRRSSFSGSP) is disordered. Over residues 742-752 (PSVAGGRSSAS) the composition is skewed to low complexity. Asn1015 and Asn1144 each carry an N-linked (GlcNAc...) asparagine glycan. A helical transmembrane segment spans residues 1177–1197 (GTLVLPAAIAFTLYVVVQAFL). Residues 1198 to 1202 (PNVPT) lie on the Cytoplasmic side of the membrane. The chain crosses the membrane as a helical span at residues 1203 to 1223 (PTIPLILLALILGLPGILIVV). At 1224-1227 (TSRK) the chain is on the extracellular side. A helical membrane pass occupies residues 1228 to 1248 (IAYVGWMLIYLLSLPIWNFVL). Topologically, residues 1249 to 1609 (PLYAYWHMDD…PPGAAPPSFD (361 aa)) are cytoplasmic. Disordered regions lie at residues 1354–1381 (PNAM…PSGA) and 1399–1609 (TDAK…PSFD). Polar residues-rich tracts occupy residues 1502–1514 (NVST…TVSE) and 1530–1552 (GSAS…QTRP). Residues 1568-1588 (AQGVRQVQRGARRSQMPNSAA) show a composition bias toward low complexity.

It belongs to the chitin synthase family. Class IV subfamily.

It localises to the cell membrane. It is found in the cytoplasmic vesicle membrane. The enzyme catalyses [(1-&gt;4)-N-acetyl-beta-D-glucosaminyl](n) + UDP-N-acetyl-alpha-D-glucosamine = [(1-&gt;4)-N-acetyl-beta-D-glucosaminyl](n+1) + UDP + H(+). Polymerizes chitin, a structural polymer of the cell wall and septum, by transferring the sugar moiety of UDP-GlcNAc to the non-reducing end of the growing chitin polymer. This is Chitin synthase 5 from Mycosarcoma maydis (Corn smut fungus).